Here is a 369-residue protein sequence, read N- to C-terminus: MLRNTFFRNTSRRFLATVKQPSIGRYTGKPNPSTGKYTVSFIEGDGIGPEISKSVKKIFSAANVPIEWESCDVSPIFVNGLTTIPDPAVQSITKNLVALKGPLATPIGKGHRSLNLTLRKTFGLFANVRPAKSIEGFKTTYENVDLVLIRENTEGEYSGIEHIVCPGVVQSIKLITRDASERVIRYAFEYARAIGRPRVIVVHKSTIQRLADGLFVNVAKELSKEYPDLTLETELIDNSVLKVVTNPSAYTDAVSVCPNLYGDILSDLNSGLSAGSLGLTPSANIGHKISIFEAVHGSAPDIAGQDKANPTALLLSSVMMLNHMGLTNHADQIQNAVLSTIASGPENRTGDLAGTATTSSFTEAVIKRL.

The N-terminal 15 residues, 1–15, are a transit peptide targeting the mitochondrion; sequence MLRNTFFRNTSRRFL. Position 105 is a phosphothreonine (threonine 105). Substrate contacts are provided by arginine 119, arginine 129, and arginine 150. Threonine 153 is modified (phosphothreonine). Aspartate 237 is a substrate binding site. Mg(2+) is bound by residues aspartate 237, aspartate 263, and aspartate 267. Residues threonine 327 and threonine 349 each carry the phosphothreonine modification.

It belongs to the isocitrate and isopropylmalate dehydrogenases family. Octamer of two non-identical subunits IDH1 and IDH2. It depends on Mg(2+) as a cofactor. Mn(2+) is required as a cofactor.

The protein resides in the mitochondrion matrix. It catalyses the reaction D-threo-isocitrate + NAD(+) = 2-oxoglutarate + CO2 + NADH. Allosterically regulated by several compounds including AMP, NAD(+), and citrate. Performs an essential role in the oxidative function of the citric acid cycle. Also binds RNA; specifically to the 5'-untranslated leaders of mitochondrial mRNAs. The protein is Isocitrate dehydrogenase [NAD] subunit 2, mitochondrial (IDH2) of Saccharomyces cerevisiae (strain ATCC 204508 / S288c) (Baker's yeast).